A 919-amino-acid chain; its full sequence is Transcriptional regulatory protein EDS1 (919 aa).

Residues 1–54 (MSHHVPNLYGTPIRDPHERKRNSASMGEVNQSVSSRNCERGSEKGTKQRKKASH) are disordered. A compositionally biased stretch (polar residues) spans 23 to 36 (SASMGEVNQSVSSR). Positions 37–46 (NCERGSEKGT) are enriched in basic and acidic residues. Residues 56–85 (CDQCRRKRIKCRFDKHTGVCQGCLEVGEKC) constitute a DNA-binding region (zn(2)-C6 fungal-type). The interval 297 to 338 (AGFPNKKLGTDGRSDKWDKNSTWKPVYRSSNPSHPSTEKNVS) is disordered. Over residues 304–317 (LGTDGRSDKWDKNS) the composition is skewed to basic and acidic residues. Over residues 318–338 (TWKPVYRSSNPSHPSTEKNVS) the composition is skewed to polar residues.

This sequence belongs to the EDS1/RGT1 family. Binds DNA in a sequence-specific manner.

It is found in the nucleus. The polypeptide is Transcriptional regulatory protein EDS1 (EDS1) (Saccharomyces cerevisiae (strain ATCC 204508 / S288c) (Baker's yeast)).